Consider the following 228-residue polypeptide: Mitochondrial assembly of ribosomal large subunit protein 1 (228 aa).

Residues 53–77 (SLTRGLHHGPQPEERTAGDARLQPG) form a disordered region.

This sequence belongs to the Iojap/RsfS family. In terms of assembly, associates with the mitochondrial ribosome large subunit (39S) via interaction with MRPL12 and/or MRPL14. The interaction generates steric hindrance that is expected to prevent premature association of the 28S and 39S ribosomal subunits. Identified in a complex composed of MALSU1, MIEF1 upstream open reading frame protein and NDUFAB1; within the trimeric complex, MIEF1 upstream open reading frame protein functions as a bridging scaffold that interacts with MALSU1 on one side, and with NDUFAB1 on the other side. Interacts with MRPL12 and MRPL14.

The protein localises to the mitochondrion matrix. Its function is as follows. Required for normal mitochondrial ribosome function and mitochondrial translation. May play a role in ribosome biogenesis by preventing premature association of the 28S and 39S ribosomal subunits. Interacts with mitochondrial ribosomal protein uL14m (MRPL14), probably blocking formation of intersubunit bridge B8, preventing association of the 28S and 39S ribosomal subunits. Addition to isolated mitochondrial ribosomal subunits partially inhibits translation, probably by interfering with the association of the 28S and 39S ribosomal subunits and the formation of functional ribosomes. May also participate in the assembly and/or regulation of the stability of the large subunit of the mitochondrial ribosome. May function as a ribosomal silencing factor. This Mus musculus (Mouse) protein is Mitochondrial assembly of ribosomal large subunit protein 1 (Malsu1).